We begin with the raw amino-acid sequence, 94 residues long: Small ribosomal subunit protein uS17 (94 aa).

Belongs to the universal ribosomal protein uS17 family. In terms of assembly, part of the 30S ribosomal subunit.

Its function is as follows. One of the primary rRNA binding proteins, it binds specifically to the 5'-end of 16S ribosomal RNA. The sequence is that of Small ribosomal subunit protein uS17 from Streptomyces griseus subsp. griseus (strain JCM 4626 / CBS 651.72 / NBRC 13350 / KCC S-0626 / ISP 5235).